The sequence spans 872 residues: Chaperone protein ClpB 2 (872 aa).

Residues 6–148 (PNQFTEKAWE…KNIIKQVRGS (143 aa)) enclose the Clp R domain. Repeat stretches follow at residues 9–73 (FTEK…IQRQ) and 85–148 (LGRS…VRGS). The interval 161–342 (QSLEKYGRDL…RRFQQVYVDQ (182 aa)) is NBD1. 208–215 (GEPGVGKT) lines the ATP pocket. The segment at 343 to 551 (PSVEDTISIL…IAEIISKWTG (209 aa)) is linker. Positions 393–527 (IDLVDEAAAR…TERELSQTQG (135 aa)) form a coiled coil. An NBD2 region spans residues 561-772 (EKEKLLHLED…RIDEVIIFHS (212 aa)). Position 611 to 618 (611 to 618 (GPTGVGKT)) interacts with ATP. The interval 773 to 872 (LDKKELRQIV…SRLPVEVFSS (100 aa)) is C-terminal.

The protein belongs to the ClpA/ClpB family. As to quaternary structure, homohexamer. The oligomerization is ATP-dependent.

The protein localises to the cytoplasm. In terms of biological role, part of a stress-induced multi-chaperone system, it is involved in the recovery of the cell from heat-induced damage, in cooperation with DnaK, DnaJ and GrpE. Acts before DnaK, in the processing of protein aggregates. Protein binding stimulates the ATPase activity; ATP hydrolysis unfolds the denatured protein aggregates, which probably helps expose new hydrophobic binding sites on the surface of ClpB-bound aggregates, contributing to the solubilization and refolding of denatured protein aggregates by DnaK. The polypeptide is Chaperone protein ClpB 2 (clpB2) (Nostoc sp. (strain PCC 7120 / SAG 25.82 / UTEX 2576)).